A 198-amino-acid chain; its full sequence is Dual specificity protein phosphatase 14 (198 aa).

A Tyrosine-protein phosphatase domain is found at 26 to 167 (GIAQITSSLF…LIDYERQLFG (142 aa)). Catalysis depends on cysteine 111, which acts as the Phosphocysteine intermediate.

Belongs to the protein-tyrosine phosphatase family. Non-receptor class dual specificity subfamily. As to quaternary structure, interacts with CD28.

It carries out the reaction O-phospho-L-tyrosyl-[protein] + H2O = L-tyrosyl-[protein] + phosphate. The enzyme catalyses O-phospho-L-seryl-[protein] + H2O = L-seryl-[protein] + phosphate. The catalysed reaction is O-phospho-L-threonyl-[protein] + H2O = L-threonyl-[protein] + phosphate. Involved in the inactivation of MAP kinases. Dephosphorylates ERK, JNK and p38 MAP-kinases. Plays a negative role in TCR signaling by dephosphorylating MAP3K7 adapter TAB1 leading to its inactivation. The sequence is that of Dual specificity protein phosphatase 14 (DUSP14) from Bos taurus (Bovine).